A 37-amino-acid polypeptide reads, in one-letter code: DGIFPTVGAGDVWYGCGDGAVGIVAETPFASTTTNPA.

Residues 1-26 (DGIFPTVGAGDVWYGCGDGAVGIVAE) form a central domain region. The tract at residues 27–37 (TPFASTTTNPA) is right arm.

It belongs to the chorion protein family.

Functionally, this protein is one of many from the eggshell of the silk moth. This chain is Chorion class CB protein PCH12, found in Antheraea polyphemus (Polyphemus moth).